Consider the following 478-residue polypeptide: Sulfate adenylyltransferase subunit 1 (478 aa).

The tr-type G domain occupies K24–D240. Residues G33–S40 are G1. G33 to S40 is a binding site for GTP. Residues G91–D95 are G2. Positions D112–G115 are G3. GTP-binding positions include D112–H116 and N167–D170. The G4 stretch occupies residues N167–D170. The tract at residues S206–L208 is G5.

The protein belongs to the TRAFAC class translation factor GTPase superfamily. Classic translation factor GTPase family. CysN/NodQ subfamily. In terms of assembly, heterodimer composed of CysD, the smaller subunit, and CysN.

The enzyme catalyses sulfate + ATP + H(+) = adenosine 5'-phosphosulfate + diphosphate. It participates in sulfur metabolism; hydrogen sulfide biosynthesis; sulfite from sulfate: step 1/3. With CysD forms the ATP sulfurylase (ATPS) that catalyzes the adenylation of sulfate producing adenosine 5'-phosphosulfate (APS) and diphosphate, the first enzymatic step in sulfur assimilation pathway. APS synthesis involves the formation of a high-energy phosphoric-sulfuric acid anhydride bond driven by GTP hydrolysis by CysN coupled to ATP hydrolysis by CysD. The protein is Sulfate adenylyltransferase subunit 1 of Aliivibrio salmonicida (strain LFI1238) (Vibrio salmonicida (strain LFI1238)).